The sequence spans 584 residues: MQFGELVKTLAAVESTTQRTTMVKLLTSLFKKARPEEIDKIIYFVLGDLRPPWEGVELGVAEKLCLRAVSKATGVSISELEALYKKTGDVGEAARKALSTAKRPGLLAFGQQKPLEVSEVYDTLLKVAQASGEGAQDMKISLLASLFAKASPEEAKYIARFVVGKLRLGVADMTLIEALSDAFGVDKEALERAYHIYPDLGKLARHVAEGRPLEEIKITPGVPVLPMLAQRLSSSSEILAKLGGSAICEYKYDGERAQIHLKEGVVKIFSRRLEDITHAYPDVVKAVREAVSAREAILEGEIVAIDPDTGDMLPFQELMHRKRKHEVAVAVEMYPVVLNLFDLLYIDGEDLTNEPLIYRRVRLSEVVQETEKVSIAKWRVFDDAEEIDVFFHEAVSLGMEGLVCKSPTSVYEMGARGWNWIKYKRDYKSEMIDTVDLVVVGAFYGRGKRAGLYGAFLLAAYDPATDMFYTVCKVGSGFTDADLKKMYEMLQPYKIPHRHPRVVSKMEPDVWFTPQVVIEVIGAEITLSPLHTCCLGAVKPGVGLAIRFPRFTGRYRTDKSPEQATTVSEMIELYKRQKKVAQPE.

An ATP-binding site is contributed by Glu-249. The N6-AMP-lysine intermediate role is filled by Lys-251. ATP contacts are provided by Arg-256, Arg-271, Glu-301, Phe-341, Arg-416, and Lys-422.

The protein belongs to the ATP-dependent DNA ligase family. Mg(2+) is required as a cofactor.

The catalysed reaction is ATP + (deoxyribonucleotide)n-3'-hydroxyl + 5'-phospho-(deoxyribonucleotide)m = (deoxyribonucleotide)n+m + AMP + diphosphate.. Functionally, DNA ligase that seals nicks in double-stranded DNA during DNA replication, DNA recombination and DNA repair. The sequence is that of DNA ligase from Pyrobaculum islandicum (strain DSM 4184 / JCM 9189 / GEO3).